We begin with the raw amino-acid sequence, 388 residues long: Mannitol-1-phosphate 5-dehydrogenase (388 aa).

5–16 (AVHFGGGNIGRG) is an NAD(+) binding site. K213 is a catalytic residue.

This sequence belongs to the mannitol dehydrogenase family. In terms of assembly, monomer.

The enzyme catalyses D-mannitol 1-phosphate + NAD(+) = beta-D-fructose 6-phosphate + NADH + H(+). Functionally, catalyzes the NAD(H)-dependent interconversion of D-fructose 6-phosphate and D-mannitol 1-phosphate in the mannitol metabolic pathway. The sequence is that of Mannitol-1-phosphate 5-dehydrogenase from Penicillium rubens (strain ATCC 28089 / DSM 1075 / NRRL 1951 / Wisconsin 54-1255) (Penicillium chrysogenum).